The chain runs to 388 residues: Succinate--CoA ligase [ADP-forming] subunit beta (388 aa).

The ATP-grasp domain maps to 9–244 (KQLFAEYGLP…PSQDDAREAH (236 aa)). ATP contacts are provided by residues lysine 46, 53 to 55 (GRG), glutamate 99, threonine 102, and glutamate 107. The Mg(2+) site is built by asparagine 199 and aspartate 213. Residues asparagine 264 and 321–323 (GIV) each bind substrate.

This sequence belongs to the succinate/malate CoA ligase beta subunit family. Heterotetramer of two alpha and two beta subunits. Mg(2+) serves as cofactor.

It catalyses the reaction succinate + ATP + CoA = succinyl-CoA + ADP + phosphate. The enzyme catalyses GTP + succinate + CoA = succinyl-CoA + GDP + phosphate. Its pathway is carbohydrate metabolism; tricarboxylic acid cycle; succinate from succinyl-CoA (ligase route): step 1/1. In terms of biological role, succinyl-CoA synthetase functions in the citric acid cycle (TCA), coupling the hydrolysis of succinyl-CoA to the synthesis of either ATP or GTP and thus represents the only step of substrate-level phosphorylation in the TCA. The beta subunit provides nucleotide specificity of the enzyme and binds the substrate succinate, while the binding sites for coenzyme A and phosphate are found in the alpha subunit. This is Succinate--CoA ligase [ADP-forming] subunit beta from Pseudomonas aeruginosa (strain LESB58).